We begin with the raw amino-acid sequence, 202 residues long: Transmembrane gamma-carboxyglutamic acid protein 2 (202 aa).

The first 23 residues, 1–23 (MRGHPSLLLLYMALTTCLDTSPS), serve as a signal peptide directing secretion. A propeptide spanning residues 24–49 (EETDQEVFLGPPEAQSFLSSHTRIPR) is cleaved from the precursor. The 47-residue stretch at 50–96 (ANHWDLELLTPGNLERECLEERCSWEEAREYFEDNTLTERFWESYIY) folds into the Gla domain. The Extracellular portion of the chain corresponds to 50 to 109 (ANHWDLELLTPGNLERECLEERCSWEEAREYFEDNTLTERFWESYIYNGKGGRGRVDVAS). Cysteines 67 and 72 form a disulfide. E70 bears the 4-carboxyglutamate mark. A helical membrane pass occupies residues 110–130 (LAVGLTGGILLIVLAGLGAFW). The Cytoplasmic portion of the chain corresponds to 131 to 202 (YLRWRQHRGQ…PPYTSLRRPH (72 aa)). Positions 143–202 (CPQEAGLISPLSPLNPLGPPTPLPPPPPPPPGLPTYEQALAASGVHDAPPPPYTSLRRPH) are disordered. The segment covering 158–175 (PLGPPTPLPPPPPPPPGL) has biased composition (pro residues). Residues 175 to 178 (LPTY) carry the LPXY motif; mediates binding to WW domain-containing proteins motif. Residues 192–195 (PPPY) carry the PPXY motif; mediates binding to WW domain-containing proteins motif.

As to quaternary structure, interacts with NEDD4. Interacts (via cytoplasmic domain) with transcriptional coactivator YAP1. In terms of processing, gamma-carboxyglutamate residues are formed by vitamin K dependent carboxylation. These residues are essential for the binding of calcium. As to expression, widely expressed with highest levels in kidney. Also highly expressed in the thyroid.

It localises to the cell membrane. The protein is Transmembrane gamma-carboxyglutamic acid protein 2 of Homo sapiens (Human).